A 528-amino-acid chain; its full sequence is Tyrosine--tRNA ligase, cytoplasmic (528 aa).

An N-acetylmethionine modification is found at M1. An N-acetylglycine; in Tyrosine--tRNA ligase, cytoplasmic, N-terminally processed modification is found at G2. Y39 lines the L-tyrosine pocket. Residue Y39 coordinates trans-resveratrol. The short motif at 44 to 52 (TTGKPHVAY) is the 'HIGH' region element. Residues Y166, Q170, D173, and Q188 each coordinate L-tyrosine. Trans-resveratrol-binding residues include Q170 and D173. K197 carries the post-translational modification N6-acetyllysine. Residue S205 is modified to Phosphoserine. Position 206 is an N6-acetyllysine (K206). Residues 222 to 226 (KMSSS) carry the 'KMSKS' region motif. Residues 242–247 (KKKLKK) carry the Nuclear localization signal motif. Positions 339-363 (AAYPDPSKQKPTAKGPAKSSEPEEI) are disordered. The tRNA-binding domain maps to 364–468 (IPSRLDIRVG…AGSAPGERVF (105 aa)). At S386 the chain carries Phosphoserine. Residues K474, K482, and K490 each carry the N6-acetyllysine modification.

This sequence belongs to the class-I aminoacyl-tRNA synthetase family. As to quaternary structure, homodimer. Interacts (when binding to resveratrol) with PARP1; interaction stimulates the poly-ADP-ribosyltransferase activity of PARP1.

The protein resides in the cytoplasm. The protein localises to the nucleus. It carries out the reaction tRNA(Tyr) + L-tyrosine + ATP = L-tyrosyl-tRNA(Tyr) + AMP + diphosphate + H(+). Its activity is regulated as follows. Resveratrol strongly inhibits the tyrosine--tRNA ligase activity. In terms of biological role, tyrosine--tRNA ligase that catalyzes the attachment of tyrosine to tRNA(Tyr) in a two-step reaction: tyrosine is first activated by ATP to form Tyr-AMP and then transferred to the acceptor end of tRNA(Tyr). Also acts as a positive regulator of poly-ADP-ribosylation in the nucleus, independently of its tyrosine--tRNA ligase activity. Activity is switched upon resveratrol-binding: resveratrol strongly inhibits the tyrosine--tRNA ligase activity and promotes relocalization to the nucleus, where YARS1 specifically stimulates the poly-ADP-ribosyltransferase activity of PARP1. This chain is Tyrosine--tRNA ligase, cytoplasmic (Yars1), found in Rattus norvegicus (Rat).